We begin with the raw amino-acid sequence, 118 residues long: NADH-ubiquinone oxidoreductase chain 3 (118 aa).

2 consecutive transmembrane segments (helical) span residues I7 to L27 and I87 to L107.

Belongs to the complex I subunit 3 family.

It localises to the mitochondrion membrane. The catalysed reaction is a ubiquinone + NADH + 5 H(+)(in) = a ubiquinol + NAD(+) + 4 H(+)(out). Functionally, core subunit of the mitochondrial membrane respiratory chain NADH dehydrogenase (Complex I) that is believed to belong to the minimal assembly required for catalysis. Complex I functions in the transfer of electrons from NADH to the respiratory chain. The immediate electron acceptor for the enzyme is believed to be ubiquinone. This is NADH-ubiquinone oxidoreductase chain 3 (ND3) from Solanum tuberosum (Potato).